Reading from the N-terminus, the 162-residue chain is Cyclic pyranopterin monophosphate synthase (162 aa).

Residues 75–77 (LCH) and 113–114 (ME) contribute to the substrate site. Asp-128 is an active-site residue.

It belongs to the MoaC family. As to quaternary structure, homohexamer; trimer of dimers.

The enzyme catalyses (8S)-3',8-cyclo-7,8-dihydroguanosine 5'-triphosphate = cyclic pyranopterin phosphate + diphosphate. It participates in cofactor biosynthesis; molybdopterin biosynthesis. In terms of biological role, catalyzes the conversion of (8S)-3',8-cyclo-7,8-dihydroguanosine 5'-triphosphate to cyclic pyranopterin monophosphate (cPMP). In Burkholderia vietnamiensis (strain G4 / LMG 22486) (Burkholderia cepacia (strain R1808)), this protein is Cyclic pyranopterin monophosphate synthase.